Consider the following 352-residue polypeptide: Anthranilate phosphoribosyltransferase (352 aa).

5-phospho-alpha-D-ribose 1-diphosphate is bound by residues glycine 94, 97–98, serine 102, 104–107, 122–130, and serine 134; these read GS, NIST, and KHGNRAVSS. An anthranilate-binding site is contributed by glycine 94. A Mg(2+)-binding site is contributed by serine 106. An anthranilate-binding site is contributed by asparagine 125. Position 180 (arginine 180) interacts with anthranilate. Mg(2+)-binding residues include aspartate 239 and glutamate 240.

Belongs to the anthranilate phosphoribosyltransferase family. As to quaternary structure, homodimer. It depends on Mg(2+) as a cofactor.

The enzyme catalyses N-(5-phospho-beta-D-ribosyl)anthranilate + diphosphate = 5-phospho-alpha-D-ribose 1-diphosphate + anthranilate. Its pathway is amino-acid biosynthesis; L-tryptophan biosynthesis; L-tryptophan from chorismate: step 2/5. Catalyzes the transfer of the phosphoribosyl group of 5-phosphorylribose-1-pyrophosphate (PRPP) to anthranilate to yield N-(5'-phosphoribosyl)-anthranilate (PRA). The sequence is that of Anthranilate phosphoribosyltransferase from Citrifermentans bemidjiense (strain ATCC BAA-1014 / DSM 16622 / JCM 12645 / Bem) (Geobacter bemidjiensis).